Reading from the N-terminus, the 205-residue chain is N-(5'-phosphoribosyl)anthranilate isomerase (205 aa).

The protein belongs to the TrpF family.

It carries out the reaction N-(5-phospho-beta-D-ribosyl)anthranilate = 1-(2-carboxyphenylamino)-1-deoxy-D-ribulose 5-phosphate. The protein operates within amino-acid biosynthesis; L-tryptophan biosynthesis; L-tryptophan from chorismate: step 3/5. The polypeptide is N-(5'-phosphoribosyl)anthranilate isomerase (Marinomonas sp. (strain MWYL1)).